We begin with the raw amino-acid sequence, 476 residues long: Sulfate adenylyltransferase subunit 1 (476 aa).

Positions 24-228 (KSLLRFLTCG…MAWYQGPTLL (205 aa)) constitute a tr-type G domain. The interval 33 to 40 (GSVDDGKS) is G1. Position 33-40 (33-40 (GSVDDGKS)) interacts with GTP. Residues 91 to 95 (GITID) form a G2 region. Residues 112 to 115 (DTPG) form a G3 region. Residues 112 to 116 (DTPGH) and 167 to 170 (NKMD) each bind GTP. Positions 167-170 (NKMD) are G4. The tract at residues 205–207 (SAL) is G5.

This sequence belongs to the TRAFAC class translation factor GTPase superfamily. Classic translation factor GTPase family. CysN/NodQ subfamily. As to quaternary structure, heterodimer composed of CysD, the smaller subunit, and CysN.

It catalyses the reaction sulfate + ATP + H(+) = adenosine 5'-phosphosulfate + diphosphate. It participates in sulfur metabolism; hydrogen sulfide biosynthesis; sulfite from sulfate: step 1/3. Functionally, with CysD forms the ATP sulfurylase (ATPS) that catalyzes the adenylation of sulfate producing adenosine 5'-phosphosulfate (APS) and diphosphate, the first enzymatic step in sulfur assimilation pathway. APS synthesis involves the formation of a high-energy phosphoric-sulfuric acid anhydride bond driven by GTP hydrolysis by CysN coupled to ATP hydrolysis by CysD. The sequence is that of Sulfate adenylyltransferase subunit 1 from Vibrio vulnificus (strain CMCP6).